The sequence spans 413 residues: Tyrosine--tRNA ligase 2 (413 aa).

Positions 58-67 (PSAPDVHLGH) match the 'HIGH' region motif. A run of 2 repeats spans residues 89–94 (GDFTGK) and 96–101 (GDPTGK). The tract at residues 89–101 (GDFTGKIGDPTGK) is 2 X 6 AA tandem repeats. The 'KMSKS' region motif lies at 242 to 246 (KMSKS). Lys245 is a binding site for ATP. The region spanning 353–413 (IAMIDLLVKL…VGKRKFLKLQ (61 aa)) is the S4 RNA-binding domain.

It belongs to the class-I aminoacyl-tRNA synthetase family. TyrS type 2 subfamily. Homodimer.

The protein localises to the cytoplasm. It catalyses the reaction tRNA(Tyr) + L-tyrosine + ATP = L-tyrosyl-tRNA(Tyr) + AMP + diphosphate + H(+). Catalyzes the attachment of tyrosine to tRNA(Tyr) in a two-step reaction: tyrosine is first activated by ATP to form Tyr-AMP and then transferred to the acceptor end of tRNA(Tyr). The protein is Tyrosine--tRNA ligase 2 of Bacillus subtilis (strain 168).